A 72-amino-acid chain; its full sequence is Sperm protein associated with the nucleus on the X chromosome N1 (72 aa).

Residues 1 to 40 form a disordered region; that stretch reads MEKPTSSTNGEKRKSPCDSNSKNDEMQETPNRDLVLEPSL. A compositionally biased stretch (basic and acidic residues) spans 10-35; that stretch reads GEKRKSPCDSNSKNDEMQETPNRDLV.

It belongs to the SPAN-X family.

In Pan troglodytes (Chimpanzee), this protein is Sperm protein associated with the nucleus on the X chromosome N1 (SPANXN1).